A 451-amino-acid chain; its full sequence is UDP-glycosyltransferase 76E11 (451 aa).

UDP-alpha-D-glucose contacts are provided by residues Ser273, 332–334 (APQ), 349–357 (HCGWNSTLE), and 371–374 (SSDQ).

This sequence belongs to the UDP-glycosyltransferase family.

In terms of biological role, possesses low quercetin 3-O-glucosyltransferase and 7-O-glucosyltransferase activities in vitro. This Arabidopsis thaliana (Mouse-ear cress) protein is UDP-glycosyltransferase 76E11 (UGT76E11).